The following is a 138-amino-acid chain: Protein Turandot B (138 aa).

The N-terminal stretch at 1–21 (MNFKTSLICFALLLIGTLCSA) is a signal peptide.

Belongs to the Turandot family.

The protein resides in the secreted. Its function is as follows. A humoral factor that may play a role in stress tolerance. This Drosophila melanogaster (Fruit fly) protein is Protein Turandot B.